The sequence spans 169 residues: MEPEALETCPYNPHHRIPLSRFQYHLASCRRKNPKKAKKMASCKYNACHVVPIKKLEEHEAACVNKSTMEEEDSLSPLKVSLPNAGQKGNRNASPVSPRLPNPDLWNVDSTNCHPMFVLKSFIPQKLVCESDTRESETDDHNPIPDCPRRRSSDRESEPPAEDTSLLKA.

CHHC U11-48K-type zinc fingers lie at residues 6–33 (LETC…RRKN) and 40–67 (MASC…VNKS). 8 residues coordinate Zn(2+): C9, H15, H25, C29, C43, H49, H59, and C63. Disordered stretches follow at residues 67–103 (STME…LPNP) and 131–169 (SDTR…LLKA). Basic and acidic residues predominate over residues 131-158 (SDTRESETDDHNPIPDCPRRRSSDRESE).

This sequence belongs to the UPF0224 (FAM112) family.

The chain is Gametocyte-specific factor 1-like (GTSF1L) from Bos taurus (Bovine).